The primary structure comprises 258 residues: Small ribosomal subunit protein uS2 (258 aa).

The disordered stretch occupies residues 226–258 (KQGQDDEETLEVDFKENADGSEEIVSAEENPED). The span at 244–258 (DGSEEIVSAEENPED) shows a compositional bias: acidic residues.

It belongs to the universal ribosomal protein uS2 family.

This is Small ribosomal subunit protein uS2 from Lactobacillus acidophilus (strain ATCC 700396 / NCK56 / N2 / NCFM).